The sequence spans 662 residues: Pro-neuregulin-1, membrane-bound isoform (662 aa).

A propeptide spanning residues 1–13 is cleaved from the precursor; it reads MSERKEGRGKGKG. The segment at 1–52 is disordered; it reads MSERKEGRGKGKGKKKDRGSRGKPGPAEGDPSPALPPRLKEMKSQESAAGSK. Topologically, residues 14 to 265 are extracellular; sequence KKKDRGSRGK…SKAEELYQKR (252 aa). One can recognise an Ig-like C2-type domain in the interval 37–128; the sequence is PRLKEMKSQE…GNDSASANIT (92 aa). The cysteines at positions 57 and 112 are disulfide-linked. N-linked (GlcNAc...) asparagine glycans are attached at residues N120, N126, and N164. Positions 178–222 constitute an EGF-like domain; sequence HLIKCAEKEKTFCVNGGECFTVKDLSNPSRYLCKCPNEFTGDRCQ. Cystine bridges form between C182–C196, C190–C210, and C212–C221. The helical transmembrane segment at 266–288 threads the bilayer; it reads VLTITGICIALLVVGIMCVVAYC. At 289-662 the chain is on the cytoplasmic side; that stretch reads KTKKQRQKLH…VIANQDPIAV (374 aa). Residues 358-373 show a composition bias toward low complexity; sequence SHYTSTAHHSTTVTQT. Disordered stretches follow at residues 358-383, 398-480, and 547-610; these read SHYT…NGHT, SVEN…PVSS, and YETT…DTPF. Polar residues predominate over residues 374–383; sequence PSHSWSNGHT. Positions 410–420 are enriched in gly residues; that stretch reads GPRGRLHGLGG. Positions 425–445 are enriched in basic and acidic residues; the sequence is SFLRHARETPDSYRDSPHSER. Over residues 564–574 the composition is skewed to basic residues; sequence TNSRRAKRTKP. A compositionally biased stretch (low complexity) spans 585–596; sequence DSNTSSVSSNSE.

Belongs to the neuregulin family. As to quaternary structure, the cytoplasmic domain interacts with the LIM domain region of LIMK1. Forms a ternary complex with ERBB3 and ITGAV:ITGB3 or ITGA6:ITGB4. Interacts with NRDC and BACE1. In terms of processing, proteolytic cleavage close to the plasma membrane on the external face leads to the release of the soluble growth factor form. Post-translationally, N- and O-glycosylated. Extensive glycosylation precedes the proteolytic cleavage. Widely expressed. Most tissues contain isoform alpha2A and isoform alpha2B. Isoform Alpha2 and isoform beta2 are the predominant forms in mesenchymal and non-neuronal organs. Isoform Beta1 is enriched in brain and spinal cord, but not in muscle and heart. Isoform Alpha2C is highly expressed in spinal cord, moderately in lung, brain, ovary, and stomach, in low amounts in the kidney, skin and heart and not detected in the liver, spleen, and placenta.

The protein localises to the cell membrane. It is found in the secreted. Its function is as follows. Direct ligand for ERBB3 and ERBB4 tyrosine kinase receptors. Concomitantly recruits ERBB1 and ERBB2 coreceptors, resulting in ligand-stimulated tyrosine phosphorylation and activation of the ERBB receptors. The multiple isoforms perform diverse functions such as inducing growth and differentiation of epithelial, glial, neuronal, and skeletal muscle cells; inducing expression of acetylcholine receptor in synaptic vesicles during the formation of the neuromuscular junction; stimulating lobuloalveolar budding and milk production in the mammary gland and inducing differentiation of mammary tumor cells; stimulating Schwann cell proliferation; implication in the development of the myocardium such as trabeculation of the developing heart. Binds to ERBB4 and ERBB3. Acts as a ligand for integrins and binds (via EGF domain) to integrins ITGAV:ITGB3 or ITGA6:ITGB4. Its binding to integrins and subsequent ternary complex formation with integrins and ERRB3 are essential for NRG1-ERBB signaling. Induces the phosphorylation and activation of MAPK3/ERK1, MAPK1/ERK2 and AKT1, and ligand-dependent ERBB4 endocytosis is essential for the NRG1-mediated activation of these kinases in neurons. In Rattus norvegicus (Rat), this protein is Pro-neuregulin-1, membrane-bound isoform (Nrg1).